Consider the following 868-residue polypeptide: Probable mixed-linked glucan synthase 3 (868 aa).

Residues 36–68 (ERKAAGGGGGGAKGKHWAAADKGERRAAKECGG) form a disordered region. Basic and acidic residues predominate over residues 53-68 (AAADKGERRAAKECGG). A run of 2 helical transmembrane segments spans residues 86 to 106 (LLHPYRALIFARLIAVLLFFG) and 116 to 136 (IMWFWTMSVAGDVWFGFSWLL). D211 is a catalytic residue. Positions 412 and 414 each coordinate substrate. D573 is a catalytic residue. The next 6 helical transmembrane spans lie at 649 to 669 (IYPVTSLFILLYAISPVMWLI), 686 to 706 (LLMIILMIHMIGWLEIKWAGI), 717 to 737 (FFMIGSTSAYPTAVLHMVVNL), 771 to 791 (MLIPTMVVLVANIGAIGVAIG), 809 to 829 (IMGLLFNMWVMFLLYPFALAI), and 837 to 857 (PIILVVLLPIIFVIVALVYVA).

This sequence belongs to the glycosyltransferase 2 family. Plant cellulose synthase-like F subfamily.

It is found in the golgi apparatus membrane. Its function is as follows. May catalyze both beta-1,3 and beta-1,4 glycosidic linkage on beta-D-glucan. Essential for (1,3;1,4)-beta-D-glucans synthesis in grasses and cereals (Poaceae). The mixed-linked glucans (which are not present in walls of dicotyledons or most other monocotyledonous plants) are particularly important constituents of the walls of the starchy endosperm and aleurone cells of cereal grains such as oats, wheat, rice and barley. They can account for up to 70% by weight of the wall. The polypeptide is Probable mixed-linked glucan synthase 3 (CSLF3) (Oryza sativa subsp. indica (Rice)).